Consider the following 426-residue polypeptide: Mitogen-activated protein kinase 8 (426 aa).

The region spanning 26–321 (YQNLKPIGSG…VDDALQHPYI (296 aa)) is the Protein kinase domain. ATP is bound by residues 33-38 (GSGAQG) and K55. D151 acts as the Proton acceptor in catalysis. T183 carries the post-translational modification Phosphothreonine. The TXY motif lies at 183-185 (TPY). At Y185 the chain carries Phosphotyrosine. The tract at residues 375-426 (QPAPLGAAVTDGSQAHTSSSSGDASSMSTDPTLPSDTDSSLETSAGTLGCCR) is disordered. Over residues 384-404 (TDGSQAHTSSSSGDASSMSTD) the composition is skewed to low complexity. Residues 405 to 420 (PTLPSDTDSSLETSAG) show a composition bias toward polar residues.

The protein belongs to the protein kinase superfamily. CMGC Ser/Thr protein kinase family. MAP kinase subfamily. Requires Mg(2+) as cofactor. Post-translationally, dually phosphorylated on Thr-183 and Tyr-185, which activates the enzyme. Strongly expressed in presumptive ectoderm and mesoderm regions and weakly expressed in endoderm regions during early stages of embryo development. Expressed in the head and dorsal regions during neurula and tailbud stages.

It is found in the cytoplasm. The protein resides in the nucleus. It localises to the synapse. The enzyme catalyses L-seryl-[protein] + ATP = O-phospho-L-seryl-[protein] + ADP + H(+). It carries out the reaction L-threonyl-[protein] + ATP = O-phospho-L-threonyl-[protein] + ADP + H(+). With respect to regulation, activated by threonine and tyrosine phosphorylation, potentially by the dual-specificity kinase, MKK7. Indirectly activated by Wnt5a. Functionally, responds to activation by environmental stress and pro-inflammatory cytokines by phosphorylating a number of transcription factors, and thus regulating transcriptional activity. Regulates morphogenic cell movements, controlling convergent extension during gastrulation. May play a role in the regulation of the circadian clock. This Xenopus laevis (African clawed frog) protein is Mitogen-activated protein kinase 8 (mapk8).